Here is a 264-residue protein sequence, read N- to C-terminus: Thymidylate synthase (264 aa).

Residue Arg21 coordinates dUMP. Residue His51 participates in (6R)-5,10-methylene-5,6,7,8-tetrahydrofolate binding. Arg126–Arg127 contributes to the dUMP binding site. Cys146 serves as the catalytic Nucleophile. DUMP contacts are provided by residues Arg166 to Asp169, Asn177, and His207 to Tyr209. Residue Asp169 participates in (6R)-5,10-methylene-5,6,7,8-tetrahydrofolate binding. (6R)-5,10-methylene-5,6,7,8-tetrahydrofolate is bound at residue Ser263.

This sequence belongs to the thymidylate synthase family. Bacterial-type ThyA subfamily. In terms of assembly, homodimer.

The protein resides in the cytoplasm. It carries out the reaction dUMP + (6R)-5,10-methylene-5,6,7,8-tetrahydrofolate = 7,8-dihydrofolate + dTMP. The protein operates within pyrimidine metabolism; dTTP biosynthesis. Functionally, catalyzes the reductive methylation of 2'-deoxyuridine-5'-monophosphate (dUMP) to 2'-deoxythymidine-5'-monophosphate (dTMP) while utilizing 5,10-methylenetetrahydrofolate (mTHF) as the methyl donor and reductant in the reaction, yielding dihydrofolate (DHF) as a by-product. This enzymatic reaction provides an intracellular de novo source of dTMP, an essential precursor for DNA biosynthesis. This chain is Thymidylate synthase, found in Bacillus pumilus (strain SAFR-032).